The following is a 57-amino-acid chain: uncharacterized protein (57 aa).

Residues 21–37 form a helical membrane-spanning segment; the sequence is GTYTLVVAFVLAFLVYS.

The protein localises to the host membrane. This is an uncharacterized protein from Human herpesvirus 6B (strain Z29) (HHV-6 variant B).